A 479-amino-acid chain; its full sequence is Deoxyribodipyrimidine photo-lyase (479 aa).

The 132-residue stretch at 6 to 137 (SLKAVWFRRD…PFYTFEDAYL (132 aa)) folds into the Photolyase/cryptochrome alpha/beta domain. FAD is bound at residue Tyr229. Residue Arg233 participates in DNA binding. FAD contacts are provided by residues 241-245 (TSRLS) and 278-285 (ELAWRDFY). 2 interaction with DNA regions span residues 278–285 (ELAWRDFY) and 344–345 (NR). An FAD-binding site is contributed by 375–377 (DYD). Gln407 serves as a coordination point for DNA.

It belongs to the DNA photolyase class-1 family. Monomer. FAD serves as cofactor. Requires (6R)-5,10-methylene-5,6,7,8-tetrahydrofolate as cofactor.

The catalysed reaction is cyclobutadipyrimidine (in DNA) = 2 pyrimidine residues (in DNA).. In terms of biological role, involved in repair of UV radiation-induced DNA damage. Catalyzes the light-dependent monomerization (300-600 nm) of cyclobutyl pyrimidine dimers (in cis-syn configuration), which are formed between adjacent bases on the same DNA strand upon exposure to ultraviolet radiation. This is Deoxyribodipyrimidine photo-lyase (phr) from Alkalihalophilus pseudofirmus (strain ATCC BAA-2126 / JCM 17055 / OF4) (Bacillus pseudofirmus).